A 129-amino-acid polypeptide reads, in one-letter code: Small ribosomal subunit protein uS11c (129 aa).

It belongs to the universal ribosomal protein uS11 family. Part of the 30S ribosomal subunit.

It localises to the plastid. It is found in the chloroplast. This chain is Small ribosomal subunit protein uS11c, found in Pleurastrum terricola (Filamentous green alga).